Here is a 1458-residue protein sequence, read N- to C-terminus: Anaphase-promoting complex subunit 1 (1458 aa).

A disordered region spans residues 186–210 (QSIKSSRNRRRESSFSREKNPDLTR). The segment covering 196–210 (RESSFSREKNPDLTR) has biased composition (basic and acidic residues). 4 PC repeats span residues 873 to 895 (GLLL…KLLS), 959 to 982 (AAGF…SDLK), 1006 to 1024 (GAIM…LEVA), and 1099 to 1124 (GICF…INFL).

It belongs to the APC1 family. In terms of assembly, the APC/C is composed of at least 13 subunits: apc1, apc2, nuc2, apc4, apc5, cut9, apc8, apc10, apc11, hcn1, apc13, apc14 and apc15.

Its function is as follows. Component of the anaphase-promoting complex/cyclosome (APC/C), a cell cycle-regulated E3 ubiquitin-protein ligase complex that controls progression through mitosis and the G1 phase of the cell cycle. The APC/C is thought to confer substrate specificity and, in the presence of ubiquitin-conjugating E2 enzymes, it catalyzes the formation of protein-ubiquitin conjugates that are subsequently degraded by the 26S proteasome. Mutations to this protein prevent the exit from mitosis. This is Anaphase-promoting complex subunit 1 (cut4) from Schizosaccharomyces pombe (strain 972 / ATCC 24843) (Fission yeast).